We begin with the raw amino-acid sequence, 100 residues long: Succinate dehydrogenase subunit 7B, mitochondrial (100 aa).

The interval 1–25 (MAFLLNNASISSHLRSSSSQKTGDA) is disordered. The transit peptide at 1-32 (MAFLLNNASISSHLRSSSSQKTGDALSISRRG) directs the protein to the mitochondrion. The segment covering 9 to 19 (SISSHLRSSSS) has biased composition (low complexity).

As to quaternary structure, component of complex II composed of eight subunits in plants: four classical SDH subunits SDH1, SDH2, SDH3 and SDH4 (a flavoprotein (FP), an iron-sulfur protein (IP), and a cytochrome b composed of a large and a small subunit.), as well as four subunits unknown in mitochondria from bacteria and heterotrophic eukaryotes.

The protein localises to the mitochondrion inner membrane. Its pathway is carbohydrate metabolism; tricarboxylic acid cycle. This is Succinate dehydrogenase subunit 7B, mitochondrial from Arabidopsis thaliana (Mouse-ear cress).